The sequence spans 277 residues: MQVVHTIAEARRARAAFDELGFVPTMGYLHQGHLALVERARAECPAVAVSIFVNPTQFGPHEDYARYPRDTARDLALLEAAGVDLVFIPTVEEMYPAGFGTYVIQPAADEVLEGAARPGHFRGVATVVCKLFNIIQPTKSYFGQKDAQQTVVVRQMVRDLNIPVEIVIVPTVREPDGLALSSRNVYLTPEQRAAAPVLYRALRAAAERYAAGERSGEVLRAVMREVLSTEPLAKPEYVSVAHPHTLRELDQIGPEGALLSMAVRFDQVRLIDNWLLL.

26-33 contacts ATP; the sequence is MGYLHQGH. Catalysis depends on His-33, which acts as the Proton donor. Gln-57 is a binding site for (R)-pantoate. Gln-57 lines the beta-alanine pocket. Residue 143 to 146 participates in ATP binding; sequence GQKD. A (R)-pantoate-binding site is contributed by Gln-149. ATP contacts are provided by residues Val-172 and 180 to 183; that span reads LSSR.

The protein belongs to the pantothenate synthetase family. In terms of assembly, homodimer.

The protein localises to the cytoplasm. The enzyme catalyses (R)-pantoate + beta-alanine + ATP = (R)-pantothenate + AMP + diphosphate + H(+). The protein operates within cofactor biosynthesis; (R)-pantothenate biosynthesis; (R)-pantothenate from (R)-pantoate and beta-alanine: step 1/1. Its function is as follows. Catalyzes the condensation of pantoate with beta-alanine in an ATP-dependent reaction via a pantoyl-adenylate intermediate. The sequence is that of Pantothenate synthetase from Chloroflexus aggregans (strain MD-66 / DSM 9485).